A 974-amino-acid polypeptide reads, in one-letter code: Mediator of RNA polymerase II transcription subunit 16 (974 aa).

The segment at 62-92 is disordered; it reads ESSSTLSTHSTTTSVNGSTTAGVGSTPNFGG. Positions 63-75 are enriched in low complexity; it reads SSSTLSTHSTTTS. Over residues 76-92 the composition is skewed to polar residues; the sequence is VNGSTTAGVGSTPNFGG. The short motif at 889 to 893 is the Nuclear localization signal element; it reads KLPIK.

The protein belongs to the Mediator complex subunit 16 family. In terms of assembly, component of the Mediator complex, which is composed of at least 21 subunits that form three structurally distinct submodules. The Mediator head module contains MED6, MED8, MED11, SRB4/MED17, SRB5/MED18, ROX3/MED19, SRB2/MED20 and SRB6/MED22, the middle module contains MED1, MED4, NUT1/MED5, MED7, CSE2/MED9, NUT2/MED10, SRB7/MED21 and SOH1/MED31, and the tail module contains MED2, PGD1/MED3, RGR1/MED14, GAL11/MED15 and SIN4/MED16. The head and the middle modules interact directly with RNA polymerase II, whereas the elongated tail module interacts with gene-specific regulatory proteins. Interacts with HOG1. In terms of processing, phosphorylated by KIN28.

It localises to the nucleus. In terms of biological role, component of the Mediator complex, a coactivator involved in the regulated transcription of nearly all RNA polymerase II-dependent genes. Mediator functions as a bridge to convey information from gene-specific regulatory proteins to the basal RNA polymerase II transcription machinery. The Mediator complex, having a compact conformation in its free form, is recruited to promoters by direct interactions with regulatory proteins and serves for the assembly of a functional preinitiation complex with RNA polymerase II and the general transcription factors. The Mediator complex unfolds to an extended conformation and partially surrounds RNA polymerase II, specifically interacting with the unphosphorylated form of the C-terminal domain (CTD) of RNA polymerase II. The Mediator complex dissociates from the RNA polymerase II holoenzyme and stays at the promoter when transcriptional elongation begins. This Saccharomyces cerevisiae (strain ATCC 204508 / S288c) (Baker's yeast) protein is Mediator of RNA polymerase II transcription subunit 16 (SIN4).